The following is a 360-amino-acid chain: tRNA-specific 2-thiouridylase MnmA (360 aa).

Residues 9 to 16 (AMSGGVDS) and Leu-35 each bind ATP. The active-site Nucleophile is Cys-104. Cysteines 104 and 197 form a disulfide. Gly-128 provides a ligand contact to ATP. Residues 147–149 (KDQ) form an interaction with tRNA region. The Cysteine persulfide intermediate role is filled by Cys-197.

This sequence belongs to the MnmA/TRMU family.

The protein localises to the cytoplasm. It catalyses the reaction S-sulfanyl-L-cysteinyl-[protein] + uridine(34) in tRNA + AH2 + ATP = 2-thiouridine(34) in tRNA + L-cysteinyl-[protein] + A + AMP + diphosphate + H(+). Catalyzes the 2-thiolation of uridine at the wobble position (U34) of tRNA, leading to the formation of s(2)U34. In Salinispora tropica (strain ATCC BAA-916 / DSM 44818 / JCM 13857 / NBRC 105044 / CNB-440), this protein is tRNA-specific 2-thiouridylase MnmA.